Here is a 269-residue protein sequence, read N- to C-terminus: 1-(5-phosphoribosyl)-5-[(5-phosphoribosylamino)methylideneamino] imidazole-4-carboxamide isomerase (269 aa).

Aspartate 10 functions as the Proton acceptor in the catalytic mechanism. The active-site Proton donor is aspartate 132.

Belongs to the HisA/HisF family.

The protein localises to the cytoplasm. The catalysed reaction is 1-(5-phospho-beta-D-ribosyl)-5-[(5-phospho-beta-D-ribosylamino)methylideneamino]imidazole-4-carboxamide = 5-[(5-phospho-1-deoxy-D-ribulos-1-ylimino)methylamino]-1-(5-phospho-beta-D-ribosyl)imidazole-4-carboxamide. It participates in amino-acid biosynthesis; L-histidine biosynthesis; L-histidine from 5-phospho-alpha-D-ribose 1-diphosphate: step 4/9. This is 1-(5-phosphoribosyl)-5-[(5-phosphoribosylamino)methylideneamino] imidazole-4-carboxamide isomerase from Xylella fastidiosa (strain Temecula1 / ATCC 700964).